Consider the following 469-residue polypeptide: Probable glucuronoxylan glucuronosyltransferase F8H (469 aa).

Over 1 to 36 (MSLDIKKPNITKTKKKKTGFVVKMQLNNNRGGNKRN) the chain is Cytoplasmic. The helical; Signal-anchor for type II membrane protein transmembrane segment at 37–57 (IFIFFFFRNYYTWILWFCLSL) threads the bilayer. Residues 58 to 469 (YFFTSYFSVE…RVLSQREVDM (412 aa)) lie on the Lumenal side of the membrane. N-linked (GlcNAc...) asparagine glycans are attached at residues asparagine 171, asparagine 203, asparagine 301, and asparagine 411.

The protein belongs to the glycosyltransferase 47 family. Expressed in xylem cells in stems and in roots.

It localises to the golgi apparatus membrane. In terms of biological role, involved in the synthesis of the hemicellulose glucuronoxylan, a major component of secondary cell walls. Probably involved in the synthesis of the glycosyl sequence at the glucuronoxylan reducing end. The sequence is that of Probable glucuronoxylan glucuronosyltransferase F8H (F8H) from Arabidopsis thaliana (Mouse-ear cress).